A 177-amino-acid chain; its full sequence is Large ribosomal subunit protein uL6 (177 aa).

Belongs to the universal ribosomal protein uL6 family. In terms of assembly, part of the 50S ribosomal subunit.

In terms of biological role, this protein binds to the 23S rRNA, and is important in its secondary structure. It is located near the subunit interface in the base of the L7/L12 stalk, and near the tRNA binding site of the peptidyltransferase center. This chain is Large ribosomal subunit protein uL6, found in Rhizobium etli (strain ATCC 51251 / DSM 11541 / JCM 21823 / NBRC 15573 / CFN 42).